The sequence spans 348 residues: Anthranilate phosphoribosyltransferase (348 aa).

Residues Gly-91, Gly-94–Asp-95, Thr-99, Asn-101–Thr-104, Lys-119–Gly-127, and Ser-131 each bind 5-phospho-alpha-D-ribose 1-diphosphate. Gly-91 is an anthranilate binding site. Ser-103 is a Mg(2+) binding site. Asn-122 is a binding site for anthranilate. Arg-177 contributes to the anthranilate binding site. Asp-236 and Glu-237 together coordinate Mg(2+).

The protein belongs to the anthranilate phosphoribosyltransferase family. Homodimer. Requires Mg(2+) as cofactor.

The catalysed reaction is N-(5-phospho-beta-D-ribosyl)anthranilate + diphosphate = 5-phospho-alpha-D-ribose 1-diphosphate + anthranilate. It functions in the pathway amino-acid biosynthesis; L-tryptophan biosynthesis; L-tryptophan from chorismate: step 2/5. In terms of biological role, catalyzes the transfer of the phosphoribosyl group of 5-phosphorylribose-1-pyrophosphate (PRPP) to anthranilate to yield N-(5'-phosphoribosyl)-anthranilate (PRA). This is Anthranilate phosphoribosyltransferase from Synechococcus elongatus (strain ATCC 33912 / PCC 7942 / FACHB-805) (Anacystis nidulans R2).